The following is a 376-amino-acid chain: MMQKLQMYVYIYLFMLIAAGPVDLNEGSEREENVEKEGLCNACAWRQNTRYSRIEAIKIQILSKLRLETAPNISKDAIRQLLPRAPPLRELIDQYDVQRDDSSDGSLEDDDYHATTETIITMPTESDFLMQADGKPKCCFFKFSSKIQYNKVVKAQLWIYLRPVKTPTTVFVQILRLIKPMKDGTRYTGIRSLKLDMSPGTGIWQSIDVKTVLQNWLKQPESNLGIEIKALDENGHDLAVTFPGPGEDGLNPFLEVKVTDTPKRSRRDFGLDCDEHSTESRCCRYPLTVDFEAFGWDWIIAPKRYKANYCSGECEFVFLQKYPHTHLVHQANPRGSAGPCCTPTKMSPINMLYFNGKEQIIYGKIPAMVVDRCGCS.

A signal peptide spans 1–24; the sequence is MMQKLQMYVYIYLFMLIAAGPVDL. A propeptide spanning residues 25-267 is cleaved from the precursor; the sequence is NEGSEREENV…VTDTPKRSRR (243 aa). N72 carries N-linked (GlcNAc...) asparagine glycosylation. 4 disulfide bridges follow: C273-C283, C282-C341, C310-C373, and C314-C375.

This sequence belongs to the TGF-beta family. As to quaternary structure, homodimer; disulfide-linked. Interacts with WFIKKN2, leading to inhibit its activity. Interacts with FSTL3. Synthesized as large precursor molecule that undergoes proteolytic cleavage to generate an N-terminal propeptide and a disulfide linked C-terminal dimer, which is the biologically active molecule. The circulating form consists of a latent complex of the C-terminal dimer and other proteins, including its propeptide, which maintain the C-terminal dimer in a latent, inactive state. Ligand activation requires additional cleavage of the prodomain by a tolloid-like metalloproteinase. Expressed specifically in developing and adult skeletal muscle. Weak expression in adipose tissue.

The protein localises to the secreted. In terms of biological role, acts specifically as a negative regulator of skeletal muscle growth. The protein is Growth/differentiation factor 8 (Mstn) of Mus musculus (Mouse).